The sequence spans 428 residues: GTPase Obg (428 aa).

In terms of domain architecture, Obg spans 1-158 (MFVDQTKIDV…RTLRLELKVL (158 aa)). In terms of domain architecture, OBG-type G spans 159-328 (ADVGLVGFPS…LMGKTADLVE (170 aa)). GTP contacts are provided by residues 165-172 (GFPSVGKS), 190-194 (FTTLT), 212-215 (DLPG), 282-285 (TQMD), and 309-311 (SSV). Mg(2+)-binding residues include serine 172 and threonine 192. Residues 350-428 (YKKPEDEGFK…IADFTFEFVD (79 aa)) enclose the OCT domain.

Belongs to the TRAFAC class OBG-HflX-like GTPase superfamily. OBG GTPase family. In terms of assembly, monomer. It depends on Mg(2+) as a cofactor.

The protein resides in the cytoplasm. Its function is as follows. An essential GTPase which binds GTP, GDP and possibly (p)ppGpp with moderate affinity, with high nucleotide exchange rates and a fairly low GTP hydrolysis rate. Plays a role in control of the cell cycle, stress response, ribosome biogenesis and in those bacteria that undergo differentiation, in morphogenesis control. This is GTPase Obg from Lactobacillus johnsonii (strain CNCM I-12250 / La1 / NCC 533).